A 169-amino-acid chain; its full sequence is ATP synthase subunit b (169 aa).

Residues 12–32 (HIYLGNAIWYLLCFAILMLLI) traverse the membrane as a helical segment.

It belongs to the ATPase B chain family. F-type ATPases have 2 components, F(1) - the catalytic core - and F(0) - the membrane proton channel. F(1) has five subunits: alpha(3), beta(3), gamma(1), delta(1), epsilon(1). F(0) has three main subunits: a(1), b(2) and c(10-14). The alpha and beta chains form an alternating ring which encloses part of the gamma chain. F(1) is attached to F(0) by a central stalk formed by the gamma and epsilon chains, while a peripheral stalk is formed by the delta and b chains.

The protein localises to the cell membrane. Increases 2-fold following exposure to low pH. Functionally, f(1)F(0) ATP synthase produces ATP from ADP in the presence of a proton or sodium gradient. F-type ATPases consist of two structural domains, F(1) containing the extramembraneous catalytic core and F(0) containing the membrane proton channel, linked together by a central stalk and a peripheral stalk. During catalysis, ATP synthesis in the catalytic domain of F(1) is coupled via a rotary mechanism of the central stalk subunits to proton translocation. In terms of biological role, component of the F(0) channel, it forms part of the peripheral stalk, linking F(1) to F(0). This Lactobacillus acidophilus (strain ATCC 700396 / NCK56 / N2 / NCFM) protein is ATP synthase subunit b.